A 492-amino-acid chain; its full sequence is UTP--glucose-1-phosphate uridylyltransferase (492 aa).

UTP-binding positions include 110–113 (LNGG), lysine 124, glutamine 183, and glycine 210. Residue 112-113 (GG) coordinates substrate. Position 124 (lysine 124) interacts with Mg(2+). Residues histidine 211 and 239 to 241 (NID) each bind substrate. UTP contacts are provided by aspartate 241 and lysine 379. A Mg(2+)-binding site is contributed by aspartate 241. Lysine 379 is an active-site residue. The interval 441 to 492 (VLTVSGNVLFGKNVVLKGTVIILADEKSKICVPDGSVLEDNIIYGNLPIIDH) is oligomerization.

Belongs to the UDPGP type 1 family. In terms of assembly, homooctamer.

It carries out the reaction alpha-D-glucose 1-phosphate + UTP + H(+) = UDP-alpha-D-glucose + diphosphate. Functionally, plays a central role as a glucosyl donor in cellular metabolic pathways. The chain is UTP--glucose-1-phosphate uridylyltransferase (UGP1) from Encephalitozoon cuniculi (strain GB-M1) (Microsporidian parasite).